Here is a 312-residue protein sequence, read N- to C-terminus: E3 ubiquitin-protein ligase RNF126-B (312 aa).

Cys-13, Cys-16, Cys-29, and Cys-32 together coordinate Zn(2+). The segment at 13–32 adopts a C4-type zinc-finger fold; sequence CHSCTAEITPRLPEYTCPRC. 2 disordered regions span residues 41–63 and 96–139; these read PETS…NRPS and GTSG…RNEG. The segment covering 44 to 55 has biased composition (low complexity); the sequence is SRNSESNSSNNS. Over residues 102–115 the composition is skewed to basic and acidic residues; it reads EETRDGESRREHQS. Basic residues predominate over residues 124-134; sequence PRARMSTRRGA. The segment at 228 to 269 adopts an RING-type zinc-finger fold; that stretch reads CPVCKEDYTVGESVRQLPCNHLFHNDCIIPWLEQHDTCPVCR. The segment at 275–312 is disordered; the sequence is QNTATNPPGLTDMTFSSSSTSSSSSTSPTDENNTANNS. Residues 290–301 are compositionally biased toward low complexity; sequence SSSSTSSSSSTS. Positions 302–312 are enriched in polar residues; that stretch reads PTDENNTANNS.

It is found in the cytoplasm. The protein localises to the nucleus. It catalyses the reaction S-ubiquitinyl-[E2 ubiquitin-conjugating enzyme]-L-cysteine + [acceptor protein]-L-lysine = [E2 ubiquitin-conjugating enzyme]-L-cysteine + N(6)-ubiquitinyl-[acceptor protein]-L-lysine.. It functions in the pathway protein modification; protein ubiquitination. In terms of biological role, E3 ubiquitin-protein ligase that mediates ubiquitination oF target proteins. Depending on the associated E2 ligase, mediates 'Lys-27'-, 'Lys-29'-, 'Lys-48'- and/or 'Lys-63'-linked polyubiquitination of substrates. Part of a BAG6-dependent quality control process ensuring that proteins of the secretory pathway that are mislocalized to the cytosol are degraded by the proteasome. Probably acts by providing the ubiquitin ligase activity associated with the BAG6 complex and be responsible for ubiquitination of the hydrophobic mislocalized proteins and their targeting to the proteasome. This Xenopus laevis (African clawed frog) protein is E3 ubiquitin-protein ligase RNF126-B.